The primary structure comprises 717 residues: Envelope glycoprotein H (717 aa).

A signal peptide spans Met-1–Cys-18. The Virion surface segment spans residues Asp-19–Ile-693. N-linked (GlcNAc...) asparagine; by host glycans are attached at residues Asn-43, Asn-59, Asn-80, and Asn-128. Positions Thr-177 to Phe-239 are interaction with gL. Residues Asn-444, Asn-560, Asn-613, and Asn-675 are each glycosylated (N-linked (GlcNAc...) asparagine; by host). Residues Ile-694–Val-714 traverse the membrane as a helical segment. Residues Tyr-715–Thr-717 lie on the Intravirion side of the membrane.

The protein belongs to the herpesviridae glycoprotein H family. As to quaternary structure, interacts with glycoprotein L (gL); this interaction is necessary for the correct processing and cell surface expression of gH. The heterodimer gH/gL seems to interact with gB trimers during fusion. In terms of processing, N-glycosylated, O-glycosylated, and sialylated.

It is found in the virion membrane. It localises to the host cell membrane. Its subcellular location is the host endosome membrane. Functionally, the heterodimer glycoprotein H-glycoprotein L is required for the fusion of viral and plasma membranes leading to virus entry into the host cell. Following initial binding to host receptor, membrane fusion is mediated by the fusion machinery composed of gB and the heterodimer gH/gL. May also be involved in the fusion between the virion envelope and the outer nuclear membrane during virion morphogenesis. The protein is Envelope glycoprotein H of Saimiriine herpesvirus 2 (strain 11) (SaHV-2).